Consider the following 308-residue polypeptide: Mu-like prophage FluMu major head subunit (308 aa).

This sequence to phage Mu protein T.

This is Mu-like prophage FluMu major head subunit from Haemophilus influenzae (strain ATCC 51907 / DSM 11121 / KW20 / Rd).